Here is a 302-residue protein sequence, read N- to C-terminus: G-protein coupled receptor A5 (302 aa).

Residues 1-20 lie on the Extracellular side of the membrane; that stretch reads MADSSNSSLNCTAIHDQTVL. The helical transmembrane segment at 21–41 threads the bilayer; sequence ILGQVFNSVWLFISVIFLYIF. Residues 42–50 are Cytoplasmic-facing; that stretch reads ACKLCFRPR. Residues 51-71 form a helical membrane-spanning segment; the sequence is IYLWLSFYTLGFMLWVLCKVL. Topologically, residues 72–81 are extracellular; the sequence is QEYVTGKFKC. A helical transmembrane segment spans residues 82 to 102; the sequence is VITNCIGDFCLVFLSCIMLGI. Over 103-122 the chain is Cytoplasmic; sequence MLDRYLKIQGTLRGGMKDIH. A helical membrane pass occupies residues 123–143; the sequence is IGIFVSASCFGSLMIALLDGL. Residues 144 to 173 are Extracellular-facing; it reads HMGDSEKLQFNGTESFKCLPATSVSSYKAQ. The chain crosses the membrane as a helical span at residues 174 to 194; it reads LMFKSIFCIICIIMCLILTCL. Residues 195-208 are Cytoplasmic-facing; that stretch reads TAKKVLGTRLRKKY. The chain crosses the membrane as a helical span at residues 209-229; that stretch reads VIVGNVGLLSFVNILLWVMIA. The Extracellular segment spans residues 230–249; it reads CGLLKQALESNLSLCPTKQS. Residues 250–270 form a helical membrane-spanning segment; the sequence is TYIYPYTMPVTVIFVLVIYLF. Residues 271–302 lie on the Cytoplasmic side of the membrane; that stretch reads SSTHMKNAMRKSGQIRHSLSSPNQVQSSFRLV.

It belongs to the G-protein coupled receptor 1 family.

The protein localises to the host cell membrane. It localises to the host endoplasmic reticulum membrane. Acts as a viral G-protein coupled receptor that constitutively activates host alphai-type G-proteins, thereby inhibiting host forskolin-triggered CREB activation. This is G-protein coupled receptor A5 (A5) from Connochaetes taurinus (Blue wildebeest).